We begin with the raw amino-acid sequence, 208 residues long: Large ribosomal subunit protein bL25 (208 aa).

This sequence belongs to the bacterial ribosomal protein bL25 family. CTC subfamily. In terms of assembly, part of the 50S ribosomal subunit; part of the 5S rRNA/L5/L18/L25 subcomplex. Contacts the 5S rRNA. Binds to the 5S rRNA independently of L5 and L18.

Its function is as follows. This is one of the proteins that binds to the 5S RNA in the ribosome where it forms part of the central protuberance. This chain is Large ribosomal subunit protein bL25, found in Bordetella pertussis (strain Tohama I / ATCC BAA-589 / NCTC 13251).